Consider the following 161-residue polypeptide: Regulator of ribonuclease activity A (161 aa).

Belongs to the RraA family. In terms of assembly, homotrimer. Binds to both RNA-binding sites in the C-terminal region of Rne and to RhlB.

It localises to the cytoplasm. Functionally, globally modulates RNA abundance by binding to RNase E (Rne) and regulating its endonucleolytic activity. Can modulate Rne action in a substrate-dependent manner by altering the composition of the degradosome. Modulates RNA-binding and helicase activities of the degradosome. In Salmonella choleraesuis (strain SC-B67), this protein is Regulator of ribonuclease activity A.